Here is a 311-residue protein sequence, read N- to C-terminus: Oxygen-dependent coproporphyrinogen-III oxidase (311 aa).

Ser93 contributes to the substrate binding site. A divalent metal cation contacts are provided by His97 and His107. His107 (proton donor) is an active-site residue. Asn109 to Arg111 contributes to the substrate binding site. Residues His153 and His184 each coordinate a divalent metal cation. Residues Tyr252–Arg287 are important for dimerization. Gly270–Arg272 contributes to the substrate binding site.

Belongs to the aerobic coproporphyrinogen-III oxidase family. As to quaternary structure, homodimer. It depends on a divalent metal cation as a cofactor.

It localises to the cytoplasm. It catalyses the reaction coproporphyrinogen III + O2 + 2 H(+) = protoporphyrinogen IX + 2 CO2 + 2 H2O. Its pathway is porphyrin-containing compound metabolism; protoporphyrin-IX biosynthesis; protoporphyrinogen-IX from coproporphyrinogen-III (O2 route): step 1/1. Its function is as follows. Involved in the heme biosynthesis. Catalyzes the aerobic oxidative decarboxylation of propionate groups of rings A and B of coproporphyrinogen-III to yield the vinyl groups in protoporphyrinogen-IX. This is Oxygen-dependent coproporphyrinogen-III oxidase from Aromatoleum aromaticum (strain DSM 19018 / LMG 30748 / EbN1) (Azoarcus sp. (strain EbN1)).